The primary structure comprises 225 residues: Endonuclease V (225 aa).

2 residues coordinate Mg(2+): Asp-43 and Asp-110.

The protein belongs to the endonuclease V family. It depends on Mg(2+) as a cofactor.

It localises to the cytoplasm. It carries out the reaction Endonucleolytic cleavage at apurinic or apyrimidinic sites to products with a 5'-phosphate.. Its function is as follows. DNA repair enzyme involved in the repair of deaminated bases. Selectively cleaves double-stranded DNA at the second phosphodiester bond 3' to a deoxyinosine leaving behind the intact lesion on the nicked DNA. The sequence is that of Endonuclease V from Thermotoga neapolitana (strain ATCC 49049 / DSM 4359 / NBRC 107923 / NS-E).